The sequence spans 240 residues: EF-hand domain-containing protein D2 (240 aa).

Residues Met-1–Ala-51 are disordered. N-acetylalanine is present on Ala-2. At Ser-11 the chain carries Phosphoserine. Positions Ala-32–Ala-47 are enriched in low complexity. Phosphoserine occurs at positions 74 and 76. Tyr-83 bears the Phosphotyrosine mark. 2 consecutive EF-hand domains span residues Lys-92 to Pro-127 and Gln-128 to Gly-163. Residues Asp-105, Asp-109, Glu-116, Asp-141, Asp-143, Asp-145, Lys-147, and Glu-152 each coordinate Ca(2+). Residue Lys-233 is modified to N6-acetyllysine.

In terms of assembly, interacts with CASP9; with inactive form. Detected in thymus, kidney, spleen, lung, liver and brain. Highest abundance in brain and lowest in kidney and thymus.

It is found in the membrane raft. In terms of biological role, may regulate B-cell receptor (BCR)-induced immature and primary B-cell apoptosis. Plays a role as negative regulator of the canonical NF-kappa-B-activating branch. Controls spontaneous apoptosis through the regulation of BCL2L1 abundance. In Mus musculus (Mouse), this protein is EF-hand domain-containing protein D2 (Efhd2).